Consider the following 252-residue polypeptide: Trans-aconitate 2-methyltransferase (252 aa).

Belongs to the methyltransferase superfamily. Tam family.

The protein localises to the cytoplasm. It carries out the reaction trans-aconitate + S-adenosyl-L-methionine = (E)-3-(methoxycarbonyl)pent-2-enedioate + S-adenosyl-L-homocysteine. Its function is as follows. Catalyzes the S-adenosylmethionine monomethyl esterification of trans-aconitate. The sequence is that of Trans-aconitate 2-methyltransferase from Escherichia coli (strain ATCC 8739 / DSM 1576 / NBRC 3972 / NCIMB 8545 / WDCM 00012 / Crooks).